Consider the following 88-residue polypeptide: FAD assembly factor SdhE (88 aa).

This sequence belongs to the SdhE FAD assembly factor family. In terms of assembly, monomer. Makes weak or transient interactions with SdhA. Interacts with YgfX. Interacts with FrdA.

The protein localises to the cytoplasm. The protein operates within antibiotic biosynthesis; prodigiosin biosynthesis. An FAD assembly protein, which accelerates covalent attachment of the cofactor into other proteins. Plays an essential role in the assembly of succinate dehydrogenase (SDH, respiratory complex II), an enzyme complex that is a component of both the tricarboxylic acid cycle and the electron transport chain, and which couples the oxidation of succinate to fumarate with the reduction of ubiquinone (coenzyme Q) to ubiquinol. Required for flavinylation (covalent attachment of FAD) of the flavoprotein subunit SdhA of SDH. Required for flavinylation of the flavoprotein subunit FrdA of fumarate reductase (FRD). Flavinylation of SDH and FRD occurs in a similar but not identical manner, as site-specific mutations display subtle differences between them. Flavinylates SdhA in vivo in the absence of the other SDH subunits; SdhE mutants that do not flavinylate also interfere with wild-type activity in a possible dominant-negative fashion. Weakly binds to FAD and facilitates its binding to SdhA. Required for production of prodigiosin antibiotic (Pig); overproduction of SdhE in a deletion mutant leads to decreased synthesis of Pig compared to wild-type. Capable of flavinylating A.pasteurianus SdhA when the SDH operon and this gene are expressed in G.oxydans; flavinylation of SdhA is detected only in the presence of sdhE. The sequence is that of FAD assembly factor SdhE from Serratia sp. (strain ATCC 39006) (Prodigiosinella confusarubida).